Consider the following 116-residue polypeptide: Large ribosomal subunit protein uL24 (116 aa).

Residues 1–21 (MATNNGAGKARHKFHVKKGDT) form a disordered region.

Belongs to the universal ribosomal protein uL24 family. As to quaternary structure, part of the 50S ribosomal subunit.

In terms of biological role, one of two assembly initiator proteins, it binds directly to the 5'-end of the 23S rRNA, where it nucleates assembly of the 50S subunit. Its function is as follows. One of the proteins that surrounds the polypeptide exit tunnel on the outside of the subunit. The protein is Large ribosomal subunit protein uL24 of Gloeobacter violaceus (strain ATCC 29082 / PCC 7421).